A 172-amino-acid polypeptide reads, in one-letter code: uncharacterized protein (172 aa).

The 148-residue stretch at 1 to 148 (MANSQKVIDV…TIHDFFENGN (148 aa)) folds into the Ferritin-like diiron domain.

This is an uncharacterized protein from Ureaplasma urealyticum (Ureaplasma urealyticum biotype 2).